The sequence spans 626 residues: DNA-directed RNA polymerase subunit gamma (626 aa).

Zn(2+) is bound by residues C71, C73, C86, and C89. D467, D469, and D471 together coordinate Mg(2+).

It belongs to the RNA polymerase beta' chain family. RpoC1 subfamily. In cyanobacteria the RNAP catalytic core is composed of 2 alpha, 1 beta, 1 beta', 1 gamma and 1 omega subunit. When a sigma factor is associated with the core the holoenzyme is formed, which can initiate transcription. Mg(2+) serves as cofactor. Zn(2+) is required as a cofactor.

The enzyme catalyses RNA(n) + a ribonucleoside 5'-triphosphate = RNA(n+1) + diphosphate. Functionally, DNA-dependent RNA polymerase catalyzes the transcription of DNA into RNA using the four ribonucleoside triphosphates as substrates. This is DNA-directed RNA polymerase subunit gamma from Synechocystis sp. (strain ATCC 27184 / PCC 6803 / Kazusa).